The chain runs to 549 residues: Lysine-specific demethylase JMJ31 (549 aa).

The region spanning 125–296 (DYRPGQIYLA…SNMPEHMDSY (172 aa)) is the JmjC domain. Fe cation is bound by residues histidine 184, aspartate 186, and histidine 266.

This sequence belongs to the JARID1 histone demethylase family. Requires Fe(2+) as cofactor. In terms of tissue distribution, mostly expressed in leaves and inflorescences, and, to a lower extent, in roots, siliques and stems.

Its subcellular location is the nucleus. Functionally, may function as histone H3 lysine demethylase and be involved in regulation of gene expression. The polypeptide is Lysine-specific demethylase JMJ31 (Arabidopsis thaliana (Mouse-ear cress)).